Here is a 336-residue protein sequence, read N- to C-terminus: MSEQTTFAPSRTDGVEAHKTLRVLLAGPRGFCAGVDRAIRVVEEALRRYGAPVYVRHEIVHNRTVVEGLEAKGAIFVEELDEVPEDGHVVFSAHGVPKAVPAEAQRRNLLYLDATCPLVSKVHREAERHFAGGGPDQRHILMIGHAGHPEVVGTMGQLPPGAVTLINDAEEARTIQPEDPTKLAFITQTTLSVDDTAEIVDILRSRFPLIEGPKREDICYATTNRQEAVKAIAPESDLVIVIGSPNSSNSQRLREVAERSGARRALLVPKLENLDWSVLEGVETLGISAGASAPESLVQEMVTALAGKYTLKIEERIVKEENINFRLPGPLAGEDD.

Cysteine 32 serves as a coordination point for [4Fe-4S] cluster. Residues histidine 61 and histidine 94 each contribute to the (2E)-4-hydroxy-3-methylbut-2-enyl diphosphate site. Dimethylallyl diphosphate contacts are provided by histidine 61 and histidine 94. Residues histidine 61 and histidine 94 each coordinate isopentenyl diphosphate. Cysteine 116 contributes to the [4Fe-4S] cluster binding site. Residue histidine 148 participates in (2E)-4-hydroxy-3-methylbut-2-enyl diphosphate binding. Histidine 148 lines the dimethylallyl diphosphate pocket. Isopentenyl diphosphate is bound at residue histidine 148. Glutamate 150 acts as the Proton donor in catalysis. Threonine 189 is a (2E)-4-hydroxy-3-methylbut-2-enyl diphosphate binding site. [4Fe-4S] cluster is bound at residue cysteine 219. Positions 247, 248, 249, and 292 each coordinate (2E)-4-hydroxy-3-methylbut-2-enyl diphosphate. Positions 247, 248, 249, and 292 each coordinate dimethylallyl diphosphate. Isopentenyl diphosphate contacts are provided by serine 247, serine 248, asparagine 249, and serine 292.

This sequence belongs to the IspH family. Requires [4Fe-4S] cluster as cofactor.

The enzyme catalyses isopentenyl diphosphate + 2 oxidized [2Fe-2S]-[ferredoxin] + H2O = (2E)-4-hydroxy-3-methylbut-2-enyl diphosphate + 2 reduced [2Fe-2S]-[ferredoxin] + 2 H(+). It catalyses the reaction dimethylallyl diphosphate + 2 oxidized [2Fe-2S]-[ferredoxin] + H2O = (2E)-4-hydroxy-3-methylbut-2-enyl diphosphate + 2 reduced [2Fe-2S]-[ferredoxin] + 2 H(+). It functions in the pathway isoprenoid biosynthesis; dimethylallyl diphosphate biosynthesis; dimethylallyl diphosphate from (2E)-4-hydroxy-3-methylbutenyl diphosphate: step 1/1. It participates in isoprenoid biosynthesis; isopentenyl diphosphate biosynthesis via DXP pathway; isopentenyl diphosphate from 1-deoxy-D-xylulose 5-phosphate: step 6/6. Its function is as follows. Catalyzes the conversion of 1-hydroxy-2-methyl-2-(E)-butenyl 4-diphosphate (HMBPP) into a mixture of isopentenyl diphosphate (IPP) and dimethylallyl diphosphate (DMAPP). Acts in the terminal step of the DOXP/MEP pathway for isoprenoid precursor biosynthesis. The chain is 4-hydroxy-3-methylbut-2-enyl diphosphate reductase from Gluconobacter oxydans (strain 621H) (Gluconobacter suboxydans).